The sequence spans 331 residues: UPF0324 membrane protein SERP0111 (331 aa).

The next 10 membrane-spanning stretches (helical) occupy residues 7 to 26 (ASFMKGIMFTFTIAIISYIL), 31 to 48 (ILHTIGALAIAIIFAMIY), 69 to 88 (LLKFAIILYGLKLNMGDILG), 93 to 115 (LLLIDIIVIIFSISLTLLLNQII), 122 to 144 (SILLGIGTGVCGAAAIAATAPIL), 154 to 176 (SVGIIALVGTIFALIYTAIEAIF), 183 to 205 (YGAWTGISLHEIAQVVLAAGIGG), 249 to 271 (IPYFLIGFIIMACINTFVPIPSL), 275 to 297 (IINVITTLCMLMAMVALGLNIVL), and 308 to 330 (FIVICITSICLSGVTLLVTSIMF).

This sequence belongs to the UPF0324 family.

Its subcellular location is the cell membrane. This Staphylococcus epidermidis (strain ATCC 35984 / DSM 28319 / BCRC 17069 / CCUG 31568 / BM 3577 / RP62A) protein is UPF0324 membrane protein SERP0111.